A 479-amino-acid chain; its full sequence is MNTILAQQIASEGGVEAWMIAQQHKSLLRFLTCGSVDDGKSTLIGRLLHDTLQIYEDQLSSLHNDSKRHGTQGEKLDLALLVDGLQAEREQGITIDVAYRYFSTEKRKFIIADTPGHEQYTRNMATGASTCDLAILLIDARKGVLDQTRRHSFISTLLGIKHLVVAINKMDLVDYREETFARIREDYLTFAEQLPGDLDIRFVPLSALEGDNVAAQSANMRWYSGPTLLEVLETVDIQRAVDRQPMRFPVQYVNRPNLDFRGYAGTLASGSVKVGERIKMLPSGVESSVARIVTFDGDKEEACAGEAITLVLNDDIDISRGDLLLAANETLAPARHAAIDVVWMAEQPLAPGQSYDVKLAGKKTRARIEAICYQIDINNLTQRDVESLPLNGIGLVEMTFDEPLALDIYQQNPVTGGLIFIDRLSNVTVGAGMVRELDERGATPPVEYSAFELELNALVRRHFPHWDARDLLGDKHGAA.

The region spanning 25–239 (KSLLRFLTCG…EVLETVDIQR (215 aa)) is the tr-type G domain. The tract at residues 34–41 (GSVDDGKS) is G1. GTP is bound at residue 34–41 (GSVDDGKS). Positions 92 to 96 (GITID) are G2. The interval 113-116 (DTPG) is G3. GTP is bound by residues 113–117 (DTPGH) and 168–171 (NKMD). The interval 168 to 171 (NKMD) is G4. Residues 206-208 (SAL) form a G5 region.

It belongs to the TRAFAC class translation factor GTPase superfamily. Classic translation factor GTPase family. CysN/NodQ subfamily. Heterodimer composed of CysD, the smaller subunit, and CysN.

The enzyme catalyses sulfate + ATP + H(+) = adenosine 5'-phosphosulfate + diphosphate. The protein operates within sulfur metabolism; hydrogen sulfide biosynthesis; sulfite from sulfate: step 1/3. With CysD forms the ATP sulfurylase (ATPS) that catalyzes the adenylation of sulfate producing adenosine 5'-phosphosulfate (APS) and diphosphate, the first enzymatic step in sulfur assimilation pathway. APS synthesis involves the formation of a high-energy phosphoric-sulfuric acid anhydride bond driven by GTP hydrolysis by CysN coupled to ATP hydrolysis by CysD. The chain is Sulfate adenylyltransferase subunit 1 from Salmonella paratyphi A (strain ATCC 9150 / SARB42).